Reading from the N-terminus, the 459-residue chain is Phosphomethylpyrimidine synthase (459 aa).

Substrate-binding positions include N80, M109, Y139, H175, 195 to 197 (SRG), 236 to 239 (DSLR), and E275. Residue H279 coordinates Zn(2+). Y302 contacts substrate. Residue H343 participates in Zn(2+) binding. 3 residues coordinate [4Fe-4S] cluster: C423, C426, and C431.

The protein belongs to the ThiC family. Requires [4Fe-4S] cluster as cofactor.

It carries out the reaction 5-amino-1-(5-phospho-beta-D-ribosyl)imidazole + S-adenosyl-L-methionine = 4-amino-2-methyl-5-(phosphooxymethyl)pyrimidine + CO + 5'-deoxyadenosine + formate + L-methionine + 3 H(+). The protein operates within cofactor biosynthesis; thiamine diphosphate biosynthesis. Its function is as follows. Catalyzes the synthesis of the hydroxymethylpyrimidine phosphate (HMP-P) moiety of thiamine from aminoimidazole ribotide (AIR) in a radical S-adenosyl-L-methionine (SAM)-dependent reaction. The protein is Phosphomethylpyrimidine synthase of Prochlorococcus marinus (strain MIT 9211).